Consider the following 315-residue polypeptide: MAKKQEIRPKNFSDFVGQNKLKKLLKVMISSAQVQNRPLDHILFYGNPGTGKTSLASIISNSLNSRIKYAQGNLLDKKTDILTLFASVEENDIIFVDEIHAINKNIEELLYSILEDFVVDIVIGVESNSKIMRLNLKPFTFIGATTQINRISKPLRDRFGLIGQISNYQVEDIEKIIKNNSKKLNIQIDEKATNLIALYSQNIPRLAINLLKRTKDFCIYEECQIIDYKLVNKTLKQLGIYENGLNESQVKYLRSLSETFYKKAVSLDLIVGFLSLQKETIISEIEPLLISNNLIVKTPRGRKITQKGISYLERI.

Positions 1–168 (MAKKQEIRPK…FGLIGQISNY (168 aa)) are large ATPase domain (RuvB-L). ATP-binding positions include isoleucine 7, arginine 8, glycine 49, lysine 52, threonine 53, serine 54, 115–117 (EDF), arginine 158, tyrosine 168, and arginine 205. Threonine 53 lines the Mg(2+) pocket. Positions 169 to 239 (QVEDIEKIIK…LVNKTLKQLG (71 aa)) are small ATPAse domain (RuvB-S). The segment at 242-315 (ENGLNESQVK…QKGISYLERI (74 aa)) is head domain (RuvB-H). Residues lysine 297 and arginine 302 each coordinate DNA.

The protein belongs to the RuvB family. As to quaternary structure, homohexamer. Forms an RuvA(8)-RuvB(12)-Holliday junction (HJ) complex. HJ DNA is sandwiched between 2 RuvA tetramers; dsDNA enters through RuvA and exits via RuvB. An RuvB hexamer assembles on each DNA strand where it exits the tetramer. Each RuvB hexamer is contacted by two RuvA subunits (via domain III) on 2 adjacent RuvB subunits; this complex drives branch migration. In the full resolvosome a probable DNA-RuvA(4)-RuvB(12)-RuvC(2) complex forms which resolves the HJ.

It localises to the cytoplasm. It carries out the reaction ATP + H2O = ADP + phosphate + H(+). Its function is as follows. The RuvA-RuvB-RuvC complex processes Holliday junction (HJ) DNA during genetic recombination and DNA repair, while the RuvA-RuvB complex plays an important role in the rescue of blocked DNA replication forks via replication fork reversal (RFR). RuvA specifically binds to HJ cruciform DNA, conferring on it an open structure. The RuvB hexamer acts as an ATP-dependent pump, pulling dsDNA into and through the RuvAB complex. RuvB forms 2 homohexamers on either side of HJ DNA bound by 1 or 2 RuvA tetramers; 4 subunits per hexamer contact DNA at a time. Coordinated motions by a converter formed by DNA-disengaged RuvB subunits stimulates ATP hydrolysis and nucleotide exchange. Immobilization of the converter enables RuvB to convert the ATP-contained energy into a lever motion, pulling 2 nucleotides of DNA out of the RuvA tetramer per ATP hydrolyzed, thus driving DNA branch migration. The RuvB motors rotate together with the DNA substrate, which together with the progressing nucleotide cycle form the mechanistic basis for DNA recombination by continuous HJ branch migration. Branch migration allows RuvC to scan DNA until it finds its consensus sequence, where it cleaves and resolves cruciform DNA. The chain is Holliday junction branch migration complex subunit RuvB from Mycoplasmopsis pulmonis (strain UAB CTIP) (Mycoplasma pulmonis).